A 1088-amino-acid chain; its full sequence is MGKYNLILSEYLSFVYNSQSAVQIPIYYSSNSELEKRCIDFHVKCVDYSKRGLSLKSLFEEYKDVIDDATLLSILSYSYDKYNAVERKLINYAKGKPLEADLTVNELDYENNKITSELFQSAEEYTDSLMDPAILTSLSSNLNAVMFWLERHSNDVADANKIYKRRLDLFIIVASTINKYGVPRHNEKYRYDYDVMKDKPYYLVTWANSAIEMLMSVFSHEDYLIAKELIVLSYSNRSTLAKLVSSPMSILVALIDINGTFITNEELELEFSDKYVKAIVPDQTFNELQEMIDNMKKAGLVDIPRMIQEWLIDCSLEKFTLMSKIYSWSFHVGFRKQKMIDAALDQLKTEYTDDVDNEMYYEYTMLIRDEIVKMLEIPVKHDDHLLQDSELAGLLSMSSASNGESRQLKFGRKTIFSTKKNMHVMDDIAHGRYTPGVIPPVNVDRPIPLGRRDVPGRRTRIIFILPYEYFIAQHAVVEKMLSYAKHTREYAEFYSQSNQLLSYGDVTRFLSSNSMVLYTDVSQWDSSQHNTQPFRKGIIMGLDMLTNMTNDPKVVHTLNLYKQTQINLMDSYVQIPDGDVIKKIQYGAVASGEKQTKAANSIANLALIKTVLSRIANKYSFITKIIRVDGDDNYAVLQFNTDVTKQMVQEVSDDVRYIYSRMNAKVKALVSTVGIEIAKRYIAGGKIFFRAGINLLNNEKRGQSTQWDQAAILYSNYIVNKLRGFETDREFILTKIIQMTSVAITGSLRLFPSERVLTTNSTFKVFDSEDFIIEYGTTDDEVYIQRAFMSLSSQKSGIADEIASSQTFKNYVSKLSDQLLVSKNTIVSKGIAVTEKAKLNSYAPVYLEKRRAQISALLTMLQKPVSFKSNKITINDILRDIKPFFVTTEANLPIQYRKFMPTLPDNVQYVIQCIGSRTYQIEDSGSKSSISKLISKYSVYKPSIEELYKVISLREREIQLYLVSLGVPLIDASTYVGSRIYSQDKYKILESYVYNLLSINYGCYQLFDFNSPDLEKLIRIPFKGKIPAVTFILHLYAKLEIINHAIKNRAWISLFCNYPKSEMIKLWKKMWNITALRSPYTSANFFQD.

The 187-residue stretch at 501–687 folds into the RdRp catalytic domain; it reads LSYGDVTRFL…AKRYIAGGKI (187 aa).

Belongs to the reoviridae RNA-directed RNA polymerase family. Interacts with VP3 (Potential). Interacts with VP2; this interaction activates VP1. Interacts with NSP5; this interaction is probably necessary for the formation of functional virus factories. Interacts with NSP2; this interaction is weak. Requires Mg(2+) as cofactor.

Its subcellular location is the virion. The catalysed reaction is RNA(n) + a ribonucleoside 5'-triphosphate = RNA(n+1) + diphosphate. In terms of biological role, RNA-directed RNA polymerase that is involved in both transcription and genome replication. Together with VP3 capping enzyme, forms an enzyme complex positioned near the channels situated at each of the five-fold vertices of the core. Following infection, the outermost layer of the virus is lost, leaving a double-layered particle (DLP) made up of the core and VP6 shell. VP1 then catalyzes the transcription of fully conservative plus-strand genomic RNAs that are extruded through the DLP's channels into the cytoplasm where they function as mRNAs for translation of viral proteins. One copy of each of the viral (+)RNAs is also recruited during core assembly, together with newly synthesized polymerase complexes and VP2. The polymerase of these novo-formed particles catalyzes the synthesis of complementary minus-strands leading to dsRNA formation. To do so, the polymerase specifically recognizes and binds 4 bases 5'-UGUG-3' in the conserved 3'-sequence of plus-strand RNA templates. VP2 presumably activates the autoinhibited VP1-RNA complex to coordinate packaging and genome replication. Once dsRNA synthesis is complete, the polymerase switches to the transcriptional mode, thus providing secondary transcription. The sequence is that of RNA-directed RNA polymerase from Homo sapiens (Human).